The sequence spans 431 residues: ATP-dependent protease ATPase subunit HslU (431 aa).

Residues V18, 60 to 65, D244, E309, and R381 contribute to the ATP site; that span reads GVGKTE.

This sequence belongs to the ClpX chaperone family. HslU subfamily. As to quaternary structure, a double ring-shaped homohexamer of HslV is capped on each side by a ring-shaped HslU homohexamer. The assembly of the HslU/HslV complex is dependent on binding of ATP.

Its subcellular location is the cytoplasm. In terms of biological role, ATPase subunit of a proteasome-like degradation complex; this subunit has chaperone activity. The binding of ATP and its subsequent hydrolysis by HslU are essential for unfolding of protein substrates subsequently hydrolyzed by HslV. HslU recognizes the N-terminal part of its protein substrates and unfolds these before they are guided to HslV for hydrolysis. The polypeptide is ATP-dependent protease ATPase subunit HslU (Caulobacter sp. (strain K31)).